The following is a 1148-amino-acid chain: Envelopment polyprotein (1148 aa).

An N-terminal signal peptide occupies residues 1 to 23; the sequence is MGKSSPVCLYLILQGLLLFDTVN. Over 24–496 the chain is Lumenal; it reads AKNLNELKME…PGLHGWATVL (473 aa). Cystine bridges form between cysteine 34–cysteine 159, cysteine 68–cysteine 165, cysteine 117–cysteine 136, cysteine 141–cysteine 146, cysteine 183–cysteine 193, and cysteine 218–cysteine 257. N-linked (GlcNAc...) asparagine; by host glycosylation is present at asparagine 142. Asparagine 357 carries N-linked (GlcNAc...) asparagine; by host glycosylation. 4 disulfides stabilise this stretch: cysteine 386–cysteine 445, cysteine 390–cysteine 399, cysteine 415–cysteine 434, and cysteine 462–cysteine 485. The N-linked (GlcNAc...) asparagine; by host glycan is linked to asparagine 409. A helical membrane pass occupies residues 497–517; sequence LLLTFCFGWVLIPTITMILLK. Residues 518 to 637 lie on the Cytoplasmic side of the membrane; the sequence is ILIAFAYLCS…LSLFRYRSRF (120 aa). Positions 526–543 are binding to the ribonucleoprotein; it reads CSKYNTDSKFRILVEKVK. CCHC-type zinc fingers lie at residues 555 to 575 and 580 to 601; these read CEVC…RKSC and CPYC…FKVC. Binding to the ribonucleoprotein stretches follow at residues 598–615 and 621–635; these read FKVC…KKSL and MQGC…RYRS. Positions 621–644 constitute an ITAM domain; it reads MQGCYRTLSLFRYRSRFFVGLVWC. The short motif at 625 to 628 is the YxxL element; sequence YRTL. A helical membrane pass occupies residues 638 to 658; that stretch reads FVGLVWCMLLVLELIVWAASA. Over 659–1115 the chain is Lumenal; that stretch reads ETQNLNDGWT…WVLGVLNGNW (457 aa). 8 cysteine pairs are disulfide-bonded: cysteine 745-cysteine 780, cysteine 749-cysteine 787, cysteine 761-cysteine 894, cysteine 775-cysteine 905, cysteine 790-cysteine 913, cysteine 816-cysteine 825, cysteine 833-cysteine 842, and cysteine 873-cysteine 877. The tract at residues 767–787 is fusion loop; sequence YEYETGWGCNPPDCPGVGTGC. The N-linked (GlcNAc...) asparagine; by host glycan is linked to asparagine 937. 5 disulfide bridges follow: cysteine 979–cysteine 1009, cysteine 1002–cysteine 1054, cysteine 1019–cysteine 1024, cysteine 1055–cysteine 1060, and cysteine 1094–cysteine 1098. The helical transmembrane segment at 1116–1136 threads the bilayer; that stretch reads MVVAVLIALLILSIFLFALCC. The segment at 1131–1148 is binding to the ribonucleoprotein; that stretch reads LFALCCPRRPSYKKDHKP. Topologically, residues 1137-1148 are cytoplasmic; sequence PRRPSYKKDHKP.

Belongs to the hantavirus envelope glycoprotein family. In terms of assembly, homodimer. Homotetramer; forms heterotetrameric Gn-Gc spikes in the pre-fusion conformation. Interacts (via C-terminus) with the nucleoprotein. Interacts with host TUFM; this interaction contributes to the virus-induced degradation of mitochondria by autophagy, which leads to degradation of host MAVS and inhibition of type I interferon (IFN) responses. Interacts with host MAP1LC3B; this interaction contributes to the virus-induced degradation of mitochondria by autophagy, which leads to degradation of host MAVS and inhibition of type I interferon (IFN) responses. As to quaternary structure, homodimer. Homotetramer; forms heterotetrameric Gn-Gc spikes in the pre-fusion conformation. Homotrimer; forms homotrimer in the post-fusion conformation at acidic pH. Interacts (via C-terminus) with the nucleoprotein. Post-translationally, envelope polyprotein precursor is quickly cleaved in vivo just after synthesis, presumably by host signal peptidase.

The protein localises to the virion membrane. It is found in the host cell surface. The protein resides in the host Golgi apparatus membrane. Its subcellular location is the host endoplasmic reticulum membrane. It localises to the host mitochondrion. Its function is as follows. Forms homotetramers with glycoprotein C at the surface of the virion. Attaches the virion to host cell receptors including integrin ITGAV/ITGB3. This attachment induces virion internalization predominantly through clathrin-dependent endocytosis. Mediates the assembly and budding of infectious virus particles through its interaction with the nucleocapsid protein and the viral genome. May dysregulate normal immune and endothelial cell responses through an ITAM motif. Translocates to mitochondria, binds to host TUFM and recruits MAP1LC3B. These interactions induce mitochondrial autophagy and therefore destruction of host MAVS leading to inhibition of type I interferon (IFN) responses. Concomitant breakdown of glycoprotein N is apparently prevented by the nucleoprotein that may inhibit Gn-stimulated autophagosome-lysosome fusion. Interacts with the viral genomic RNA. Forms heterooctamers with glycoprotein N at the surface of the virion. Attaches the virion to host cell receptors including integrin ITGAV/ITGB3. This attachment induces virion internalization predominantly through clathrin-dependent endocytosis. Class II fusion protein that promotes fusion of viral membrane with host endosomal membrane after endocytosis of the virion. The chain is Envelopment polyprotein (GP) from Homo sapiens (Human).